The primary structure comprises 777 residues: UPF0313 protein VP1980 (777 aa).

The Radical SAM core domain occupies 363–642 (AYDMIKTSVN…KALLRYHDPA (280 aa)). [4Fe-4S] cluster-binding residues include Cys-377, Cys-381, and Cys-384. The disordered stretch occupies residues 675–777 (AQTPAQRRKS…PAGQRKPKRR (103 aa)). Over residues 680–698 (QRRKSGRHGANRFATKHTK) the composition is skewed to basic residues. Residues 709–719 (KRAEGGSKDGK) show a composition bias toward basic and acidic residues. Positions 736-747 (PASNGQRPSGNG) are enriched in polar residues. Residues 755–769 (KPQGQGRPQGQGKPA) show a composition bias toward low complexity.

It belongs to the UPF0313 family. [4Fe-4S] cluster is required as a cofactor.

This Vibrio parahaemolyticus serotype O3:K6 (strain RIMD 2210633) protein is UPF0313 protein VP1980.